Here is a 298-residue protein sequence, read N- to C-terminus: Acetylglutamate kinase (298 aa).

Substrate-binding positions include 69 to 70, Arg-91, and Asn-196; that span reads GG.

It belongs to the acetylglutamate kinase family. ArgB subfamily.

It localises to the cytoplasm. It catalyses the reaction N-acetyl-L-glutamate + ATP = N-acetyl-L-glutamyl 5-phosphate + ADP. The protein operates within amino-acid biosynthesis; L-arginine biosynthesis; N(2)-acetyl-L-ornithine from L-glutamate: step 2/4. In terms of biological role, catalyzes the ATP-dependent phosphorylation of N-acetyl-L-glutamate. The chain is Acetylglutamate kinase from Rhodopseudomonas palustris (strain BisB18).